Consider the following 675-residue polypeptide: Gastrula zinc finger protein xFG20-1 (675 aa).

C2H2-type zinc fingers lie at residues phenylalanine 62–histidine 84, phenylalanine 90–histidine 112, phenylalanine 118–histidine 140, tyrosine 146–histidine 168, phenylalanine 174–histidine 196, histidine 202–histidine 224, phenylalanine 257–histidine 279, phenylalanine 286–histidine 308, leucine 344–histidine 366, and leucine 373–histidine 395. The segment at arginine 302 to serine 325 is disordered. A compositionally biased stretch (polar residues) spans histidine 304 to serine 325. Over residues threonine 390–threonine 407 the composition is skewed to polar residues. Residues threonine 390 to proline 423 are disordered. Residues glutamate 408 to glutamate 421 show a composition bias toward basic and acidic residues. C2H2-type zinc fingers lie at residues phenylalanine 424–histidine 446, tyrosine 452–histidine 474, phenylalanine 480–histidine 501, tyrosine 507–histidine 529, tyrosine 535–histidine 557, phenylalanine 563–histidine 585, phenylalanine 591–histidine 613, and phenylalanine 619–histidine 642.

It belongs to the krueppel C2H2-type zinc-finger protein family.

It localises to the nucleus. In terms of biological role, may be involved in transcriptional regulation. The sequence is that of Gastrula zinc finger protein xFG20-1 from Xenopus laevis (African clawed frog).